Here is a 412-residue protein sequence, read N- to C-terminus: Serine hydroxymethyltransferase (412 aa).

(6S)-5,6,7,8-tetrahydrofolate-binding positions include Leu117 and 121–123 (GHL). Residue Lys226 is modified to N6-(pyridoxal phosphate)lysine. Position 349-351 (349-351 (SPF)) interacts with (6S)-5,6,7,8-tetrahydrofolate.

The protein belongs to the SHMT family. In terms of assembly, homodimer. Pyridoxal 5'-phosphate is required as a cofactor.

It is found in the cytoplasm. It carries out the reaction (6R)-5,10-methylene-5,6,7,8-tetrahydrofolate + glycine + H2O = (6S)-5,6,7,8-tetrahydrofolate + L-serine. Its pathway is one-carbon metabolism; tetrahydrofolate interconversion. It functions in the pathway amino-acid biosynthesis; glycine biosynthesis; glycine from L-serine: step 1/1. Functionally, catalyzes the reversible interconversion of serine and glycine with tetrahydrofolate (THF) serving as the one-carbon carrier. This reaction serves as the major source of one-carbon groups required for the biosynthesis of purines, thymidylate, methionine, and other important biomolecules. Also exhibits THF-independent aldolase activity toward beta-hydroxyamino acids, producing glycine and aldehydes, via a retro-aldol mechanism. In Geobacillus kaustophilus (strain HTA426), this protein is Serine hydroxymethyltransferase.